The following is a 165-amino-acid chain: Large ribosomal subunit protein uL10 (165 aa).

Belongs to the universal ribosomal protein uL10 family. As to quaternary structure, part of the ribosomal stalk of the 50S ribosomal subunit. The N-terminus interacts with L11 and the large rRNA to form the base of the stalk. The C-terminus forms an elongated spine to which L12 dimers bind in a sequential fashion forming a multimeric L10(L12)X complex.

Forms part of the ribosomal stalk, playing a central role in the interaction of the ribosome with GTP-bound translation factors. This chain is Large ribosomal subunit protein uL10, found in Pectobacterium carotovorum subsp. carotovorum (strain PC1).